The primary structure comprises 176 residues: NAD(P)H-quinone oxidoreductase subunit 6, chloroplastic (176 aa).

5 consecutive transmembrane segments (helical) span residues 10 to 30, 32 to 52, 61 to 81, 95 to 115, and 152 to 172; these read FILV…VLLP, PIYS…LYIL, AQLL…VMFL, VGDG…ITTI, and FLIP…GAIA.

Belongs to the complex I subunit 6 family. In terms of assembly, NDH is composed of at least 16 different subunits, 5 of which are encoded in the nucleus.

It is found in the plastid. The protein resides in the chloroplast thylakoid membrane. The catalysed reaction is a plastoquinone + NADH + (n+1) H(+)(in) = a plastoquinol + NAD(+) + n H(+)(out). It carries out the reaction a plastoquinone + NADPH + (n+1) H(+)(in) = a plastoquinol + NADP(+) + n H(+)(out). Functionally, NDH shuttles electrons from NAD(P)H:plastoquinone, via FMN and iron-sulfur (Fe-S) centers, to quinones in the photosynthetic chain and possibly in a chloroplast respiratory chain. The immediate electron acceptor for the enzyme in this species is believed to be plastoquinone. Couples the redox reaction to proton translocation, and thus conserves the redox energy in a proton gradient. The sequence is that of NAD(P)H-quinone oxidoreductase subunit 6, chloroplastic (ndhG) from Trachelium caeruleum (Blue throatwort).